A 181-amino-acid chain; its full sequence is MSELTTIARPYAKAAFDFAVEQSATDKSAVEKWTEMLGFAAQVADNEQIRDFFANTFSVQKAADAMVSICGEQLDQYGQNLIRLMAENKRLTVLPAVFDEFQRYVEEHNATAEVQVISAQPLNATQEQKIAAAMEKRLARKVKLNCSVDNSLLAGVIIRTDDFVIDGSSRGQLNRLANELQ.

Belongs to the ATPase delta chain family. As to quaternary structure, F-type ATPases have 2 components, F(1) - the catalytic core - and F(0) - the membrane proton channel. F(1) has five subunits: alpha(3), beta(3), gamma(1), delta(1), epsilon(1). F(0) has three main subunits: a(1), b(2) and c(10-14). The alpha and beta chains form an alternating ring which encloses part of the gamma chain. F(1) is attached to F(0) by a central stalk formed by the gamma and epsilon chains, while a peripheral stalk is formed by the delta and b chains.

It localises to the cell inner membrane. F(1)F(0) ATP synthase produces ATP from ADP in the presence of a proton or sodium gradient. F-type ATPases consist of two structural domains, F(1) containing the extramembraneous catalytic core and F(0) containing the membrane proton channel, linked together by a central stalk and a peripheral stalk. During catalysis, ATP synthesis in the catalytic domain of F(1) is coupled via a rotary mechanism of the central stalk subunits to proton translocation. In terms of biological role, this protein is part of the stalk that links CF(0) to CF(1). It either transmits conformational changes from CF(0) to CF(1) or is implicated in proton conduction. The polypeptide is ATP synthase subunit delta (Mannheimia succiniciproducens (strain KCTC 0769BP / MBEL55E)).